The primary structure comprises 445 residues: Zinc finger protein SHOOT GRAVITROPISM 5 (445 aa).

Positions 22-31 are enriched in low complexity; the sequence is SSSDPFLSSS. The segment at 22–59 is disordered; that stretch reads SSSDPFLSSSENGVTTTNTSTQKRKRRPAGTPDPDAEV. Residues 32–42 are compositionally biased toward polar residues; the sequence is ENGVTTTNTST. 3 C2H2-type zinc fingers span residues 73-95, 115-145, and 151-178; these read YICEICNQGFQRDQNLQMHRRRH, YVCPEPTCLHHNPCHALGDLVGIKKHFRRKH, and WVCERCSKGYAVQSDYKAHLKTCGTRGH. Positions 153, 156, 169, 173, 180, 182, 195, and 199 each coordinate Zn(2+). Residues 178–201 form a CCHC-type 2; atypical zinc finger; that stretch reads HSCDCGRVFSRVESFIEHQDNCSA. An SHR-binding region spans residues 188 to 200; that stretch reads RVESFIEHQDNCS. 2 disordered regions span residues 203 to 253 and 281 to 314; these read RVHR…LEGR and SSNQNPNQENQQQKVKEPSHHHNHNHDTTNLNLS. A compositionally biased stretch (polar residues) spans 214 to 248; that stretch reads TAVTVPACSSRTASTVSTPSSETNYGGTVAVTTPQ. Over residues 281 to 293 the composition is skewed to low complexity; the sequence is SSNQNPNQENQQQ. Residues 340–397 are a coiled coil; that stretch reads MKIAMKEKAYAEEAKREAKRQREIAENEFANAKKIRQKAQAELERAKFLKEQSMKKIS.

In terms of tissue distribution, mainly expressed in the endodermis, the gravity-sensing tissue in inflorescence stems. Mostly present in stems and flowers, and, to a lower extent, in seedlings, hypocotyls, roots and the shoot apical meristem (SAM).

The protein resides in the nucleus. Functionally, transcription factor involved in inflorescence stems gravitropism, probably by regulating starch accumulation in amyloplasts of graviperceptive cells. Required for stem circumnutation movements. Regulates lateral organ morphogenesis and gravitropic responses. Acts cooperatively with IDD16 to control silique and branche orientation. Involved in the establishment of auxin gradients through the regulation of auxin biosynthesis and transport. This Arabidopsis thaliana (Mouse-ear cress) protein is Zinc finger protein SHOOT GRAVITROPISM 5.